The following is an 858-amino-acid chain: DNA mismatch repair protein MutS (858 aa).

Position 609–616 (609–616 (GPNMSGKS)) interacts with ATP.

The protein belongs to the DNA mismatch repair MutS family.

Its function is as follows. This protein is involved in the repair of mismatches in DNA. It is possible that it carries out the mismatch recognition step. This protein has a weak ATPase activity. The chain is DNA mismatch repair protein MutS from Enterococcus faecalis (strain ATCC 700802 / V583).